We begin with the raw amino-acid sequence, 476 residues long: Bifunctional protein HldE (476 aa).

Residues 1–318 form a ribokinase region; it reads MKVTLPDFRR…ENAIRGRAET (318 aa). 195–198 provides a ligand contact to ATP; that stretch reads NLSE. Aspartate 264 is a catalytic residue. Residues 344 to 476 form a cytidylyltransferase region; the sequence is MTNGIFDILH…IIQSIKNGRG (133 aa).

It in the N-terminal section; belongs to the carbohydrate kinase PfkB family. This sequence in the C-terminal section; belongs to the cytidylyltransferase family. As to quaternary structure, homodimer.

The enzyme catalyses D-glycero-beta-D-manno-heptose 7-phosphate + ATP = D-glycero-beta-D-manno-heptose 1,7-bisphosphate + ADP + H(+). It catalyses the reaction D-glycero-beta-D-manno-heptose 1-phosphate + ATP + H(+) = ADP-D-glycero-beta-D-manno-heptose + diphosphate. It functions in the pathway nucleotide-sugar biosynthesis; ADP-L-glycero-beta-D-manno-heptose biosynthesis; ADP-L-glycero-beta-D-manno-heptose from D-glycero-beta-D-manno-heptose 7-phosphate: step 1/4. It participates in nucleotide-sugar biosynthesis; ADP-L-glycero-beta-D-manno-heptose biosynthesis; ADP-L-glycero-beta-D-manno-heptose from D-glycero-beta-D-manno-heptose 7-phosphate: step 3/4. In terms of biological role, catalyzes the phosphorylation of D-glycero-D-manno-heptose 7-phosphate at the C-1 position to selectively form D-glycero-beta-D-manno-heptose-1,7-bisphosphate. Its function is as follows. Catalyzes the ADP transfer from ATP to D-glycero-beta-D-manno-heptose 1-phosphate, yielding ADP-D-glycero-beta-D-manno-heptose. This Yersinia pseudotuberculosis serotype O:1b (strain IP 31758) protein is Bifunctional protein HldE.